The following is a 286-amino-acid chain: MTALLIDGNALSKTLRGQAAERAAALTARGHQPGLAVILVGENPASEVYVRNKIKACEDNGFFSLKDAYPATLSEADLLARIDELNRDPKIHGILVQLPLPAHIDSHKVIEAIAPEKDVDGFHVANAGALMTGKPLFRPCTPYGVMKMFEAHGIALQGANAVVIGRSNIVGKPMAMMLLDAGATVTICHSKTRDLAAHTREADIVVAAVGKRNILTADMVKPGATVIDVGMNRDDAGKLCGDVDFAGVKEVAGYITPVPGGVGPMTITMLLINTIESAERAAAAAA.

NADP(+) is bound by residues 165-167 and serine 190; that span reads GRS.

This sequence belongs to the tetrahydrofolate dehydrogenase/cyclohydrolase family. Homodimer.

It catalyses the reaction (6R)-5,10-methylene-5,6,7,8-tetrahydrofolate + NADP(+) = (6R)-5,10-methenyltetrahydrofolate + NADPH. The enzyme catalyses (6R)-5,10-methenyltetrahydrofolate + H2O = (6R)-10-formyltetrahydrofolate + H(+). Its pathway is one-carbon metabolism; tetrahydrofolate interconversion. Catalyzes the oxidation of 5,10-methylenetetrahydrofolate to 5,10-methenyltetrahydrofolate and then the hydrolysis of 5,10-methenyltetrahydrofolate to 10-formyltetrahydrofolate. This chain is Bifunctional protein FolD, found in Burkholderia cenocepacia (strain ATCC BAA-245 / DSM 16553 / LMG 16656 / NCTC 13227 / J2315 / CF5610) (Burkholderia cepacia (strain J2315)).